A 423-amino-acid chain; its full sequence is F-box/LRR-repeat protein 2 (423 aa).

The F-box domain occupies 9–55; sequence GLINKKLPKELLLRIFSFLDIVTLCRCAQISKAWNILALDGSNWQRI. LRR repeat units lie at residues 61–87, 88–113, 114–139, 140–165, 166–191, 192–217, 218–243, 244–269, 270–295, 296–321, 322–350, 351–375, and 376–401; these read QTDV…SLRG, CIGV…NLNG, CTKI…DLTS, CVSI…NLSW, CDQI…LLRG, CTQL…NLQS, CSRI…CLSG, CSNL…EAAR, CSHL…DLEE, CILI…SLSH, CELI…ELDN, CLLI…ELYD, and CQQV…AYFA. Positions 80–90 are interaction with Calmodulin; sequence LRKLSLRGCIG. A Glycyl lysine isopeptide (Lys-Gly) (interchain with G-Cter in ubiquitin) cross-link involves residue lysine 201. A Phosphothreonine modification is found at threonine 404. Cysteine 420 is lipidated: S-geranylgeranyl cysteine. The short motif at 420–423 is the CAAX motif element; sequence CVIL.

As to quaternary structure, part of the SCF (SKP1-CUL1-F-box) E3 ubiquitin-protein ligase complex SCF(FBXL2) composed of CUL1, SKP1, RBX1 and FBXL2. Interacts with calmodulin; may antagonize substrate ubiquitination by SCF(FBXL2). May interact with PIK3R1. Interacts with PTPN13. (Microbial infection) Interacts with hepatitis C virus non-structural protein 5A (NS5A) and less efficiently, with hepatitis C virus non-structural protein 5B (NS5B); a reaction crucial for hepatitis C virus RNA replication. Phosphorylated by GSK-beta (GSK3B), promoting recognition by FBXO3, leading to its ubiquitination by the SCF(FBXO3) complex. Post-translationally, ubiquitinated at Lys-201 by the SCF(FBXO3) complex in response to lipopolysaccharide (LPS), leading to its degradation by the proteasome. As to expression, expressed in brain, heart, kidney, liver, lung, pancreas and placenta.

It localises to the membrane. It participates in protein modification; protein ubiquitination. Its function is as follows. Calcium-activated substrate recognition component of the SCF (SKP1-cullin-F-box protein) E3 ubiquitin-protein ligase complex, SCF(FBXL2), which mediates the ubiquitination and subsequent proteasomal degradation of target proteins. Unlike many F-box proteins, FBXL2 does not seem to target phosphodegron within its substrates but rather calmodulin-binding motifs and is thereby antagonized by calmodulin. This is the case for the cyclins CCND2 and CCND3 which polyubiquitination and subsequent degradation are inhibited by calmodulin. Through CCND2 and CCND3 degradation induces cell-cycle arrest in G(0). SCF(FBXL2) also mediates PIK3R2 ubiquitination and proteasomal degradation thereby regulating phosphatidylinositol 3-kinase signaling and autophagy. PCYT1A monoubiquitination by SCF(FBXL2) and subsequent degradation regulates synthesis of phosphatidylcholine, which is utilized for formation of membranes and of pulmonary surfactant. The SCF(FBXL2) complex acts as a regulator of inflammation by mediating ubiquitination and degradation of TRAF proteins (TRAF1, TRAF2, TRAF3, TRAF4, TRAF5 and TRAF6). The SCF(FBXL2) complex acts as a negative regulator of the NLRP3 inflammasome by mediating ubiquitination and degradation of NLRP3. The polypeptide is F-box/LRR-repeat protein 2 (Homo sapiens (Human)).